The following is a 249-amino-acid chain: 3-deoxy-D-manno-octulosonic acid kinase (249 aa).

Aspartate 175 is a catalytic residue.

It belongs to the protein kinase superfamily. KdkA/RfaP family.

Its subcellular location is the cell inner membrane. The catalysed reaction is an alpha-Kdo-(2-&gt;6)-lipid IVA + ATP = a 4-O-phospho-alpha-Kdo-(2-&gt;6)-lipid IVA + ADP + H(+). It participates in bacterial outer membrane biogenesis; LPS core biosynthesis. Functionally, catalyzes the ATP-dependent phosphorylation of the 3-deoxy-D-manno-octulosonic acid (Kdo) residue in Kdo-lipid IV(A) at the 4-OH position. The sequence is that of 3-deoxy-D-manno-octulosonic acid kinase from Stenotrophomonas maltophilia (strain R551-3).